We begin with the raw amino-acid sequence, 182 residues long: MLTKGKILISEPYLGDSTFERSVVLLCEHNDSGAFGFMLNKSTTLTINSVLEEQLTFEQNLFLGGPVAQDSLFFLLRQDRAILKDSVHIKDDLYWGGDFEHLKTLIQEGTLELDNCRFFLGYSGWGEDQLEYELEKHSWIIADINSEDMFVKNPESMWQNVLRSMGGDYKVLSNYPIDPRLN.

Belongs to the UPF0301 (AlgH) family.

This chain is UPF0301 protein CHU_1773, found in Cytophaga hutchinsonii (strain ATCC 33406 / DSM 1761 / CIP 103989 / NBRC 15051 / NCIMB 9469 / D465).